Consider the following 711-residue polypeptide: Polyribonucleotide nucleotidyltransferase (711 aa).

Mg(2+) is bound by residues aspartate 486 and aspartate 492. A KH domain is found at 553–612 (PRIHTIKISPDKIKDVIGKGGSVIRALTEETGTTIEIEDDGTVKIAATDGEKAKFAIRRI). Residues 622–690 (GRIYNGKVTR…RQGRVRLSIK (69 aa)) enclose the S1 motif domain. Positions 690 to 711 (KEATEQTQPAAAPEAPAAEQGE) are disordered. A compositionally biased stretch (low complexity) spans 694-711 (EQTQPAAAPEAPAAEQGE).

The protein belongs to the polyribonucleotide nucleotidyltransferase family. In terms of assembly, component of the RNA degradosome, which is a multiprotein complex involved in RNA processing and mRNA degradation. Requires Mg(2+) as cofactor.

It is found in the cytoplasm. It catalyses the reaction RNA(n+1) + phosphate = RNA(n) + a ribonucleoside 5'-diphosphate. Involved in mRNA degradation. Catalyzes the phosphorolysis of single-stranded polyribonucleotides processively in the 3'- to 5'-direction. The protein is Polyribonucleotide nucleotidyltransferase of Enterobacter sp. (strain 638).